Here is a 255-residue protein sequence, read N- to C-terminus: Acetylglutamate kinase (255 aa).

Substrate contacts are provided by residues 40–41 (GG), Arg62, and Asn153.

The protein belongs to the acetylglutamate kinase family. ArgB subfamily.

The protein resides in the cytoplasm. It catalyses the reaction N-acetyl-L-glutamate + ATP = N-acetyl-L-glutamyl 5-phosphate + ADP. Its pathway is amino-acid biosynthesis; L-arginine biosynthesis; N(2)-acetyl-L-ornithine from L-glutamate: step 2/4. Catalyzes the ATP-dependent phosphorylation of N-acetyl-L-glutamate. The chain is Acetylglutamate kinase from Bacillus anthracis (strain A0248).